A 909-amino-acid polypeptide reads, in one-letter code: Protein translocase subunit SecA (909 aa).

ATP is bound by residues glutamine 87, 105-109 (GEGKT), and aspartate 507. The segment at 857 to 909 (DTHSELAEEQPPVAENRENKQQPFVRKNEKVGRNDPCPCGSGKKYKQCHGKLN) is disordered. Positions 871–889 (ENRENKQQPFVRKNEKVGR) are enriched in basic and acidic residues. Residues cysteine 893, cysteine 895, cysteine 904, and histidine 905 each contribute to the Zn(2+) site. The span at 899–909 (KKYKQCHGKLN) shows a compositional bias: basic residues.

The protein belongs to the SecA family. In terms of assembly, monomer and homodimer. Part of the essential Sec protein translocation apparatus which comprises SecA, SecYEG and auxiliary proteins SecDF-YajC and YidC. Zn(2+) serves as cofactor.

It localises to the cell inner membrane. The protein localises to the cytoplasm. The catalysed reaction is ATP + H2O + cellular proteinSide 1 = ADP + phosphate + cellular proteinSide 2.. Part of the Sec protein translocase complex. Interacts with the SecYEG preprotein conducting channel. Has a central role in coupling the hydrolysis of ATP to the transfer of proteins into and across the cell membrane, serving both as a receptor for the preprotein-SecB complex and as an ATP-driven molecular motor driving the stepwise translocation of polypeptide chains across the membrane. This chain is Protein translocase subunit SecA, found in Nitrosomonas europaea (strain ATCC 19718 / CIP 103999 / KCTC 2705 / NBRC 14298).